The sequence spans 712 residues: Lactoperoxidase (712 aa).

An N-terminal signal peptide occupies residues 1–22; that stretch reads MWVCLQLPVFLASVTLFEVAAS. Residues 23 to 100 constitute a propeptide that is removed on maturation; the sequence is DTIAQAASTT…WEESFKRLRR (78 aa). Residue Asn-106 is glycosylated (N-linked (GlcNAc...) (complex) asparagine; alternate). A glycan (N-linked (GlcNAc...) (hybrid) asparagine; alternate) is linked at Asn-106. Cystine bridges form between Cys-123/Cys-284, Cys-132/Cys-145, Cys-246/Cys-256, and Cys-250/Cys-274. Asn-212 carries N-linked (GlcNAc...) (complex) asparagine; alternate glycosylation. Residue Asn-212 is glycosylated (N-linked (GlcNAc...) (high mannose) asparagine; alternate). Asp-225 is a binding site for heme b. His-226 functions as the Proton acceptor in the catalytic mechanism. A Ca(2+)-binding site is contributed by Asp-227. Ca(2+) contacts are provided by Thr-301, Phe-303, Asp-305, and Ser-307. The residue at position 315 (Ser-315) is a Phosphoserine. The N-linked (GlcNAc...) (high mannose) asparagine glycan is linked to Asn-322. A disulfide bridge connects residues Cys-354 and Cys-365. The N-linked (GlcNAc...) asparagine glycan is linked to Asn-358. Glu-375 provides a ligand contact to heme b. A glycan (N-linked (GlcNAc...) (complex) asparagine; alternate) is linked at Asn-449. Residue Asn-449 is glycosylated (N-linked (GlcNAc...) (hybrid) asparagine; alternate). An N-linked (GlcNAc...) (high mannose) asparagine; alternate glycan is attached at Asn-449. His-468 contributes to the heme b binding site. 3'-nitrotyrosine is present on Tyr-482. Disulfide bonds link Cys-573/Cys-630 and Cys-671/Cys-696.

Belongs to the peroxidase family. XPO subfamily. Requires Ca(2+) as cofactor. Heme b serves as cofactor. Mammary gland; milk.

The protein localises to the secreted. It is found in the cytoplasm. The enzyme catalyses 2 a phenolic donor + H2O2 = 2 a phenolic radical donor + 2 H2O. The catalysed reaction is thiocyanate + H2O2 + H(+) = hypothiocyanous acid + H2O. It carries out the reaction iodide + H2O2 = hypoiodite + H2O. Functionally, heme-containing oxidoreductase which catalyzes the conversion of thiocyanate (SCN(-)) into antimicrobial agent hypothiocyanous acid (OSCN(-)) in the presence of hydrogen peroxide (H2O2). Also involved in the conversion of iodide (I(-)) into hypoiodite (IO(-)) in the presence of H2O2. Responsible for the inactivation of a wide range of micro-organisms and hence, important component of defense mechanism. Shows antibacterial properties against E.coli, K.pneumoniae, P.aeruginosa, S.sonnei, S.saphrophyticus, S.epidermidis and S.dysenteriae. May protect the udder from infection and may promote growth in newborns. May be implicated in airway host defense against infection. May contribute to maintaining an appropriate H2O2 cellular level, therefore protecting cells from H2O2-caused injuries and inflammation. This is Lactoperoxidase from Bubalus bubalis (Domestic water buffalo).